A 120-amino-acid chain; its full sequence is NAD(P)H-quinone oxidoreductase subunit 3, chloroplastic (120 aa).

3 helical membrane passes run 9–29 (IFWA…IISG), 64–84 (MFAL…PWAV), and 88–108 (VLGV…VVGS).

This sequence belongs to the complex I subunit 3 family. In terms of assembly, NDH is composed of at least 16 different subunits, 5 of which are encoded in the nucleus.

It localises to the plastid. It is found in the chloroplast thylakoid membrane. It carries out the reaction a plastoquinone + NADH + (n+1) H(+)(in) = a plastoquinol + NAD(+) + n H(+)(out). It catalyses the reaction a plastoquinone + NADPH + (n+1) H(+)(in) = a plastoquinol + NADP(+) + n H(+)(out). NDH shuttles electrons from NAD(P)H:plastoquinone, via FMN and iron-sulfur (Fe-S) centers, to quinones in the photosynthetic chain and possibly in a chloroplast respiratory chain. The immediate electron acceptor for the enzyme in this species is believed to be plastoquinone. Couples the redox reaction to proton translocation, and thus conserves the redox energy in a proton gradient. This is NAD(P)H-quinone oxidoreductase subunit 3, chloroplastic from Nuphar advena (Common spatterdock).